The primary structure comprises 97 residues: Defensin-like protein 245 (97 aa).

Positions 1–24 (MKFAAILLVTCVLFSLLPSHLSQG) are cleaved as a signal peptide. 4 disulfide bridges follow: cysteine 39/cysteine 96, cysteine 50/cysteine 79, cysteine 58/cysteine 89, and cysteine 77/cysteine 91.

This sequence belongs to the DEFL family. Flower buds and roots.

The protein resides in the secreted. This is Defensin-like protein 245 (SCRL4) from Arabidopsis thaliana (Mouse-ear cress).